The primary structure comprises 682 residues: Protein ACTIVITY OF BC1 COMPLEX KINASE 1, chloroplastic (682 aa).

Residues 1–79 (MESIHCNSLL…NSTDASVMTT (79 aa)) constitute a chloroplast transit peptide. In terms of domain architecture, Protein kinase spans 236–567 (KISSQTIAAA…IQVLFKDGVF (332 aa)). ATP-binding positions include 242 to 250 (IAAASLGQV) and Lys-265. Asp-400 (proton acceptor) is an active-site residue.

Belongs to the protein kinase superfamily. ADCK protein kinase family. Interacts with ABC1K3 in plastoglobules (PG). In terms of tissue distribution, expressed in all tissues (e.g. especially in leaves) at all developmental stages from seed germination to flowering, except in the root tips.

It is found in the plastid. The protein localises to the chloroplast. Its subcellular location is the plastoglobule. The catalysed reaction is L-seryl-[protein] + ATP = O-phospho-L-seryl-[protein] + ADP + H(+). It carries out the reaction L-threonyl-[protein] + ATP = O-phospho-L-threonyl-[protein] + ADP + H(+). Functionally, kinase that can phosphorylate the tocopherol cyclase VTE1, a key enzyme of tocopherol (vitamin E) metabolism and involved in the recycling of oxidated alpha-tocopherol quinone, possibly stabilizing it at plastoglobules. Also regulates plastoglobule protein composition. Prevents photodamage of chloroplasts under continuous red light, thus working in opposition to ABC1K3. Together with ABC1K1, contributes to plastoglobule (PG) function in prenyl-lipid metabolism, stress response, and thylakoid remodeling. Involved in chlorophyll degradation and in the maintenance of the number of chlorophyll-binding photosynthetic thylakoid membranes. Ensures photosynthetic electron transport by regulating the homeostasis of plastoquinone, beta-carotene and xanthophyll lutein, as well as membrane antioxidant tocopherol metabolism. Seems to affect specifically stability or turnover of D1 protein, product of psbA, one of the four core subunits of the photosystem II (PSII). Required for photooxidative stress responses, including the induction of oxidative stress response genes (e.g. FSD1, CSD1, CAT1, and UTG71C1), to prevent photosystem II core and chlorophyll degradations. The protein is Protein ACTIVITY OF BC1 COMPLEX KINASE 1, chloroplastic of Arabidopsis thaliana (Mouse-ear cress).